A 518-amino-acid chain; its full sequence is Transcription factor TT8 (518 aa).

2 coiled-coil regions span residues Glu-220–Glu-240 and Val-405–Arg-428. The region spanning Arg-359–Leu-408 is the bHLH domain.

This sequence belongs to the bHLH protein family. Homodimer. Interacts with MYB4, MYB5, MYB6, MYB82, MYB113, MYB114, MYB75/PAP1, MYB90/PAP2, and TT2. As to expression, buds, flowers and developing siliques, but not in leaves, stems and roots.

The protein resides in the nucleus. Functionally, transcription activator, when associated with MYB75/PAP1 or MYB90/PAP2. Involved in the control of flavonoid pigmentation. Plays a key role in regulating leucoanthocyanidin reductase (BANYULS) and dihydroflavonol-4-reductase (DFR). Not required for leucoanthocyanidin dioxygenase (LDOX) expression. The chain is Transcription factor TT8 from Arabidopsis thaliana (Mouse-ear cress).